Reading from the N-terminus, the 241-residue chain is Tetraspanin-1 (241 aa).

Over 1–11 (MGCFNFIKVMM) the chain is Cytoplasmic. The chain crosses the membrane as a helical span at residues 12–32 (ILFNMLIFLCGAALLAVGIWV). The Extracellular portion of the chain corresponds to 33–52 (SVDGPSFVKIFGPMSSSAMQ). The chain crosses the membrane as a helical span at residues 53–73 (FVNVGYFLIAAGAVLFALGFL). Topologically, residues 74–88 (GCYGAQTESKCALMT) are cytoplasmic. A helical transmembrane segment spans residues 89–109 (FFFILLLIFIAEVAAAVVALV). Topologically, residues 110 to 211 (YTTLAENFLT…KQLLYDIRTN (102 aa)) are extracellular. N-linked (GlcNAc...) asparagine glycans are attached at residues asparagine 141, asparagine 154, asparagine 167, asparagine 180, asparagine 189, and asparagine 194. A helical transmembrane segment spans residues 212 to 232 (AVTVGGVAAGIGGLELAAMIV). At 233-241 (SMYLYCNLE) the chain is on the cytoplasmic side.

Belongs to the tetraspanin (TM4SF) family. As to quaternary structure, interacts with SLC19A2. Interacts with NTRK1/TRKA.

Its subcellular location is the lysosome membrane. Structural component of specialized membrane microdomains known as tetraspanin-enriched microdomains (TERMs), which act as platforms for receptor clustering and signaling. Participates thereby in diverse biological functions such as cell signal transduction, adhesion, migration and protein trafficking. Regulates neuronal differentiation in response to NGF by facilitating NGF-mediated activation of NTRK1/TRKA receptor tyrosine kinase and subsequent downstream signaling pathways. Plays a role in the inhibition of TNFalpha-induced apoptosis. Mechanistically, inhibits the NF-kappa-B signaling pathway by blocking phosphorylation of CHUK. Also promotes the stability of the thiamine transporter 1/SLC19A2 in intestinal epithelial cells leading to an increase of thiamine uptake process. The protein is Tetraspanin-1 (TSPAN1) of Bos taurus (Bovine).